The primary structure comprises 83 residues: Toxin TdNa3 (83 aa).

The first 20 residues, 1 to 20, serve as a signal peptide directing secretion; that stretch reads MKGMIMLISCLMLIDVVVES. Positions 21–82 constitute an LCN-type CS-alpha/beta domain; the sequence is KNGYIIEPKG…IFDYYNNKCG (62 aa). Cystine bridges form between Cys-31/Cys-81, Cys-35/Cys-57, Cys-43/Cys-62, and Cys-47/Cys-64. The residue at position 81 (Cys-81) is a Cysteine amide.

It belongs to the long (4 C-C) scorpion toxin superfamily. Sodium channel inhibitor family. Beta subfamily. As to expression, expressed by the venom gland.

The protein resides in the secreted. Inhibits the sodium currents (Nav) in an apparent irreversible manner. Produces small depolarization and induces repetitive firing in squid axons. Is specific for arthropods (crickets, triatomides, crabs and squids), but is non-toxic to mice. This is Toxin TdNa3 from Tityus discrepans (Venezuelan scorpion).